We begin with the raw amino-acid sequence, 180 residues long: Adenine phosphoribosyltransferase (180 aa).

The protein belongs to the purine/pyrimidine phosphoribosyltransferase family. Homodimer.

It is found in the cytoplasm. It carries out the reaction AMP + diphosphate = 5-phospho-alpha-D-ribose 1-diphosphate + adenine. Its pathway is purine metabolism; AMP biosynthesis via salvage pathway; AMP from adenine: step 1/1. In terms of biological role, catalyzes a salvage reaction resulting in the formation of AMP, that is energically less costly than de novo synthesis. The sequence is that of Adenine phosphoribosyltransferase from Mycolicibacterium smegmatis (strain ATCC 700084 / mc(2)155) (Mycobacterium smegmatis).